A 190-amino-acid chain; its full sequence is Pyridoxal 5'-phosphate synthase subunit PdxT (190 aa).

46 to 48 (GES) contributes to the L-glutamine binding site. The Nucleophile role is filled by Cys-78. L-glutamine is bound by residues Arg-108 and 137 to 138 (IR). Active-site charge relay system residues include His-174 and Glu-176.

This sequence belongs to the glutaminase PdxT/SNO family. As to quaternary structure, in the presence of PdxS, forms a dodecamer of heterodimers. Only shows activity in the heterodimer.

The enzyme catalyses aldehydo-D-ribose 5-phosphate + D-glyceraldehyde 3-phosphate + L-glutamine = pyridoxal 5'-phosphate + L-glutamate + phosphate + 3 H2O + H(+). It catalyses the reaction L-glutamine + H2O = L-glutamate + NH4(+). The protein operates within cofactor biosynthesis; pyridoxal 5'-phosphate biosynthesis. In terms of biological role, catalyzes the hydrolysis of glutamine to glutamate and ammonia as part of the biosynthesis of pyridoxal 5'-phosphate. The resulting ammonia molecule is channeled to the active site of PdxS. This chain is Pyridoxal 5'-phosphate synthase subunit PdxT, found in Chloroflexus aurantiacus (strain ATCC 29366 / DSM 635 / J-10-fl).